Consider the following 234-residue polypeptide: LexA repressor (234 aa).

Residues 41–61 (RAEIAAELGFRSPNAAEEHLK) constitute a DNA-binding region (H-T-H motif). Active-site for autocatalytic cleavage activity residues include serine 152 and lysine 189.

Belongs to the peptidase S24 family. As to quaternary structure, homodimer.

The catalysed reaction is Hydrolysis of Ala-|-Gly bond in repressor LexA.. Represses a number of genes involved in the response to DNA damage (SOS response), including recA and lexA. In the presence of single-stranded DNA, RecA interacts with LexA causing an autocatalytic cleavage which disrupts the DNA-binding part of LexA, leading to derepression of the SOS regulon and eventually DNA repair. This is LexA repressor from Polaromonas naphthalenivorans (strain CJ2).